Here is a 54-residue protein sequence, read N- to C-terminus: Secreted virulence factor MC69 (54 aa).

An N-terminal signal peptide occupies residues 1–18 (MKFTLALLTTLCASLASA). A disulfide bridge connects residues C38 and C48.

Belongs to the MC69 virulence factor family.

It is found in the secreted. In terms of biological role, secreted protein required for appressorial penetration of intact host epidermal cells and for pathogenicity. This is Secreted virulence factor MC69 from Colletotrichum orbiculare (strain 104-T / ATCC 96160 / CBS 514.97 / LARS 414 / MAFF 240422) (Cucumber anthracnose fungus).